We begin with the raw amino-acid sequence, 596 residues long: UDP-glucuronate:xylan alpha-glucuronosyltransferase 2 (596 aa).

A helical; Signal-anchor for type II membrane protein transmembrane segment spans residues 17 to 37; it reads LIRFNLVLLGFSFLLYTAIFF. Mn(2+) is bound by residues aspartate 395 and aspartate 397. Substrate contacts are provided by residues 395-397, 424-426, 451-455, and 504-509; these read DAD, NSG, NGGDQ, and HYLGWK. Residue histidine 504 participates in Mn(2+) binding.

The protein belongs to the glycosyltransferase 8 family. Glycogenin subfamily. The cofactor is Mn(2+).

The protein localises to the golgi apparatus membrane. Glycosyltransferase required for the addition of both glucuronic acid and 4-O-methylglucuronic acid branches to xylan in stem cell walls. In association with GUX1, is responsible for almost all of the substitutions of the xylan backbone in stem glucuronoxylan. The chain is UDP-glucuronate:xylan alpha-glucuronosyltransferase 2 (GUX2) from Arabidopsis thaliana (Mouse-ear cress).